Here is a 399-residue protein sequence, read N- to C-terminus: Argonaute-binding protein 1 (399 aa).

In terms of assembly, component of the argonaute siRNA chaperone (ARC) complex composed of ago1, arb1 and arb2. Interacts with ago1.

It is found in the nucleus. Its subcellular location is the cytoplasm. In terms of biological role, component of the argonaute siRNA chaperone (ARC) complex which is required for histone H3K9 methylation, heterochromatin assembly and siRNA generation. The ARC complex contains mostly double-stranded siRNA. Inhibits the release of the siRNA passenger strand from ago1 together with arb2. Inhibits the slicer activity of ago1. Required for swi6 localization to the centromeric repeats. This Schizosaccharomyces pombe (strain 972 / ATCC 24843) (Fission yeast) protein is Argonaute-binding protein 1 (arb1).